The chain runs to 101 residues: Urease subunit beta (101 aa).

The protein belongs to the urease beta subunit family. Heterotrimer of UreA (gamma), UreB (beta) and UreC (alpha) subunits. Three heterotrimers associate to form the active enzyme.

The protein resides in the cytoplasm. It carries out the reaction urea + 2 H2O + H(+) = hydrogencarbonate + 2 NH4(+). Its pathway is nitrogen metabolism; urea degradation; CO(2) and NH(3) from urea (urease route): step 1/1. This is Urease subunit beta from Mesorhizobium japonicum (strain LMG 29417 / CECT 9101 / MAFF 303099) (Mesorhizobium loti (strain MAFF 303099)).